A 365-amino-acid chain; its full sequence is Putative glutamate--cysteine ligase 2-2 (365 aa).

Belongs to the glutamate--cysteine ligase type 2 family. YbdK subfamily.

It carries out the reaction L-cysteine + L-glutamate + ATP = gamma-L-glutamyl-L-cysteine + ADP + phosphate + H(+). Functionally, ATP-dependent carboxylate-amine ligase which exhibits weak glutamate--cysteine ligase activity. This chain is Putative glutamate--cysteine ligase 2-2, found in Mycolicibacterium vanbaalenii (strain DSM 7251 / JCM 13017 / BCRC 16820 / KCTC 9966 / NRRL B-24157 / PYR-1) (Mycobacterium vanbaalenii).